A 341-amino-acid polypeptide reads, in one-letter code: Putative UPF0607 protein FLJ37424 (341 aa).

Disordered stretches follow at residues 72–131 (PKTE…NPRP) and 216–283 (GLLM…LPCL). A compositionally biased stretch (basic and acidic residues) spans 79–101 (EEPKEATEVKDQVETQGQEDNKR). A compositionally biased stretch (polar residues) spans 108-127 (EAASTSRPLETQGNLTSSWY). Positions 243–252 (AGHRSHKRKL) are enriched in basic residues.

Belongs to the UPF0607 family.

This Homo sapiens (Human) protein is Putative UPF0607 protein FLJ37424.